The primary structure comprises 198 residues: V-type proton ATPase subunit E (198 aa).

Belongs to the V-ATPase E subunit family.

In terms of biological role, produces ATP from ADP in the presence of a proton gradient across the membrane. This Borrelia hermsii (strain HS1 / DAH) protein is V-type proton ATPase subunit E.